Consider the following 286-residue polypeptide: Elongation factor Ts (286 aa).

The tract at residues 82-85 (TDFV) is involved in Mg(2+) ion dislocation from EF-Tu.

The protein belongs to the EF-Ts family.

The protein localises to the cytoplasm. Its function is as follows. Associates with the EF-Tu.GDP complex and induces the exchange of GDP to GTP. It remains bound to the aminoacyl-tRNA.EF-Tu.GTP complex up to the GTP hydrolysis stage on the ribosome. This Hamiltonella defensa subsp. Acyrthosiphon pisum (strain 5AT) protein is Elongation factor Ts.